The primary structure comprises 201 residues: MLAFTLRFIKNKRYLATLAGALVIIAGLTSQHAWSGNGLPQINGKALAALAKQHPVVVLFRHAERCDRSDNTCLSDSTGITVNGAQDARALGKAFSADIQNYNLYSSNTVRTIQSATWFSAGRSLTVDKKMMDCGSGIYASINTLLKKSQNKNIVIFTHNHCLTYIAKNKRGVKFDPDYLNALVMHAENGKLFLDGEFVPG.

A signal peptide spans 1-35 (MLAFTLRFIKNKRYLATLAGALVIIAGLTSQHAWS).

It belongs to the phosphoglycerate mutase family. Ais subfamily.

The protein localises to the periplasm. It functions in the pathway bacterial outer membrane biogenesis; lipopolysaccharide metabolism. Catalyzes the dephosphorylation of heptose(II) of the outer membrane lipopolysaccharide core. The protein is Lipopolysaccharide core heptose(II)-phosphate phosphatase of Salmonella heidelberg (strain SL476).